Here is a 523-residue protein sequence, read N- to C-terminus: Monocarboxylate transporter 7 (523 aa).

Residues 1 to 21 (MTQNKLKLCSKANVYTEVPDG) are Cytoplasmic-facing. A helical membrane pass occupies residues 22-42 (GWGWAVAVSFFFVEVFTYGII). Over 43 to 62 (KTFGVFFNDLMDSFNESNSR) the chain is Extracellular. Residues 63–83 (ISWIISICVFVLTFSAPLATV) traverse the membrane as a helical segment. The Cytoplasmic portion of the chain corresponds to 84-91 (LSNRFGHR). The chain crosses the membrane as a helical span at residues 92–112 (LVVMLGGLLVSTGMVAASFSQ). Over 113-118 (EVSHMY) the chain is Extracellular. Residues 119–139 (VAIGIISGLGYCFSFLPTVTI) form a helical membrane-spanning segment. The Cytoplasmic segment spans residues 140–149 (LSQYFGKRRS). The chain crosses the membrane as a helical span at residues 150–170 (IVTAVASTGECFAVFAFAPAI). The Extracellular segment spans residues 171–184 (MALKERIGWRYSLL). A helical transmembrane segment spans residues 185-205 (FVGLLQLNIVIFGALLRPIFI). Residues 206-299 (RGPASPKIVI…KEKSFICYAL (94 aa)) lie on the Cytoplasmic side of the membrane. Ser-234, Ser-237, Ser-240, and Ser-247 each carry phosphoserine. Residues 300-320 (FGLFATLGFFAPSLYIIPLGI) form a helical membrane-spanning segment. Residues 321 to 330 (SLGIDQDRAA) lie on the Extracellular side of the membrane. The helical transmembrane segment at 331–351 (FLLSTMAIAEVFGRIGAGFVL) threads the bilayer. Topologically, residues 352-358 (NREPIRK) are cytoplasmic. Residues 359–379 (IYIELICVILLTVSLFAFTFA) traverse the membrane as a helical segment. Residues 380–381 (TE) lie on the Extracellular side of the membrane. Residues 382–402 (FWGLMSCSIFFGFMVGTIGGT) traverse the membrane as a helical segment. The Cytoplasmic segment spans residues 403-423 (HIPLLAEDDVVGIEKMSSAAG). Residues 424–444 (VYIFIQSIAGLAGPPLAGLLV) form a helical membrane-spanning segment. The Extracellular portion of the chain corresponds to 445–452 (DQSKIYSR). Residues 453–473 (AFYSCAAGMALAAVCLALVRP) form a helical membrane-spanning segment. The Cytoplasmic portion of the chain corresponds to 474-523 (CKMGLCQHHHSGETKVVSHRGKTLQDIPEDFLEMDLAKNEHRVHVQMEPV).

This sequence belongs to the major facilitator superfamily. Monocarboxylate porter (TC 2.A.1.13) family. Forms functional complexes with BSG/CD147 or EMB/GP70 ancillary proteins.

The protein localises to the basolateral cell membrane. The catalysed reaction is taurine(out) = taurine(in). Monocarboxylate transporter selective for taurine. May associate with BSG/CD147 or EMB/GP70 ancillary proteins to mediate facilitative efflux or influx of taurine across the plasma membrane. The transport is pH- and sodium-independent. Rather low-affinity, is likely effective for taurine transport in tissues where taurine is present at high concentrations. This chain is Monocarboxylate transporter 7, found in Homo sapiens (Human).